Here is an 892-residue protein sequence, read N- to C-terminus: Alanine--tRNA ligase (892 aa).

Residues histidine 565, histidine 569, cysteine 675, and histidine 679 each contribute to the Zn(2+) site. The disordered stretch occupies residues 852 to 871 (MGGKGGGGRPDMAQAGGPEA).

Belongs to the class-II aminoacyl-tRNA synthetase family. Zn(2+) is required as a cofactor.

Its subcellular location is the cytoplasm. It catalyses the reaction tRNA(Ala) + L-alanine + ATP = L-alanyl-tRNA(Ala) + AMP + diphosphate. Functionally, catalyzes the attachment of alanine to tRNA(Ala) in a two-step reaction: alanine is first activated by ATP to form Ala-AMP and then transferred to the acceptor end of tRNA(Ala). Also edits incorrectly charged Ser-tRNA(Ala) and Gly-tRNA(Ala) via its editing domain. The chain is Alanine--tRNA ligase from Parvibaculum lavamentivorans (strain DS-1 / DSM 13023 / NCIMB 13966).